We begin with the raw amino-acid sequence, 151 residues long: Cell division protein SepF (151 aa).

The disordered stretch occupies residues 31 to 53 (EEVEEPRRRSRTGVKQERETGQN).

It belongs to the SepF family. In terms of assembly, homodimer. Interacts with FtsZ.

The protein localises to the cytoplasm. In terms of biological role, cell division protein that is part of the divisome complex and is recruited early to the Z-ring. Probably stimulates Z-ring formation, perhaps through the cross-linking of FtsZ protofilaments. Its function overlaps with FtsA. The protein is Cell division protein SepF of Halalkalibacterium halodurans (strain ATCC BAA-125 / DSM 18197 / FERM 7344 / JCM 9153 / C-125) (Bacillus halodurans).